A 104-amino-acid chain; its full sequence is Gastrin (104 aa).

An N-terminal signal peptide occupies residues 1–21 (MQRLCAHALILVLALAAFCEA). The propeptide occupies 22-58 (SWKPHSQLQDAPVAPGANKGQEPLRMDRLGPASHPRR). A disordered region spans residues 26–70 (HSQLQDAPVAPGANKGQEPLRMDRLGPASHPRRQLGLQDPPHMVA). Residue tyrosine 87 is modified to Sulfotyrosine. Phenylalanine 92 carries the phenylalanine amide modification. A Phosphoserine modification is found at serine 96. Positions 96 to 104 (SAEEGDQHP) are excised as a propeptide.

Belongs to the gastrin/cholecystokinin family. Post-translationally, sulfation enhances proteolytic processing, and blocks peptide degradation. Levels of sulfation differ between proteolytically-cleaved gastrins and between tissues.

Its subcellular location is the secreted. Its function is as follows. Gastrin stimulates the stomach mucosa to produce and secrete hydrochloric acid and the pancreas to secrete its digestive enzymes. It also stimulates smooth muscle contraction and increases blood circulation and water secretion in the stomach and intestine. This is Gastrin (GAST) from Ovis aries (Sheep).